Here is a 139-residue protein sequence, read N- to C-terminus: MAMSSLWWTAILLLALTVSMCYGVPTYQDFLRTHVDFPKTSFPNIAAYCNVMMVRRGINVHGRCKSLNTFVHTDPRNLNTLCINQPNRALRTTQQQLPVTDCKLIRSHPTCSYTGNQFNHRVRVGCWGGLPVHLDGTFP.

An N-terminal signal peptide occupies residues 1 to 21 (MAMSSLWWTAILLLALTVSMC). The Proton acceptor role is filled by H34. 3 cysteine pairs are disulfide-bonded: C49/C102, C64/C111, and C82/C126. TRNA-binding residues include C102 and V122. The active-site Proton donor is the H133.

Belongs to the pancreatic ribonuclease family. Homodimer. Interacts with RNH1; inhibiting ANG ribonuclease activity.

It localises to the secreted. The protein localises to the nucleus. The protein resides in the nucleolus. Its subcellular location is the cytoplasm. It is found in the stress granule. Its function is as follows. Secreted ribonuclease that can either promote or restrict cell proliferation of target cells, depending on the context. Endocytosed in target cells via its receptor PLXNB2 and translocates to the cytoplasm or nucleus. Under stress conditions, localizes to the cytoplasm and promotes the assembly of stress granules (SGs): specifically cleaves a subset of tRNAs within anticodon loops to produce tRNA-derived stress-induced fragments (tiRNAs), resulting in translation repression and inhibition of cell proliferation. tiRNas also prevent formation of apoptosome, thereby promoting cell survival. Preferentially cleaves RNAs between a pyrimidine and an adenosine residue, suggesting that it cleaves the anticodon loop of tRNA(Ala) (32-UUAGCAU-38) after positions 33 and 36. Cleaves a subset of tRNAs, including tRNA(Ala), tRNA(Glu), tRNA(Gly), tRNA(Lys), tRNA(Val), tRNA(His), tRNA(Asp) and tRNA(Sec). Under growth conditions and in differentiated cells, translocates to the nucleus and stimulates ribosomal RNA (rRNA) transcription, including that containing the initiation site sequences of 45S rRNA, thereby promoting cell growth and proliferation. Angiogenin induces vascularization of normal and malignant tissues via its ability to promote rRNA transcription. In Gallus gallus (Chicken), this protein is Angiogenin (ANG).